The chain runs to 186 residues: MKFSQAVIALAAATVVSAQLPDVPQCSLPCFLDALTTDGCSELTDFKCHCSKPELPAKITPCVKSKCPVAEQVSVSNAVVKQCSEAGAPVSIPPVEESSSKPSEPSTSEAPTASPTESTPAPTTPAPTGTGSPSGTGAPGGPSGTGTFTNTGVPTQSTPIYTGAASGLSANIGGMGAAILAIAAYL.

Residues 1–18 (MKFSQAVIALAAATVVSA) form the signal peptide. A CFEM domain is found at 19-108 (QLPDVPQCSL…SSKPSEPSTS (90 aa)). Disulfide bonds link Cys26-Cys67, Cys30-Cys62, Cys40-Cys48, and Cys50-Cys83. Asp45 is a heme binding site. The tract at residues 89–159 (PVSIPPVEES…NTGVPTQSTP (71 aa)) is disordered. Positions 96–131 (EESSSKPSEPSTSEAPTASPTESTPAPTTPAPTGTG) are enriched in low complexity. The segment covering 132–144 (SPSGTGAPGGPSG) has biased composition (gly residues). Over residues 148 to 159 (FTNTGVPTQSTP) the composition is skewed to polar residues. Residue Gly163 is the site of GPI-anchor amidated glycine attachment. Positions 164-186 (AASGLSANIGGMGAAILAIAAYL) are cleaved as a propeptide — removed in mature form.

It belongs to the RBT5 family. The GPI-anchor is attached to the protein in the endoplasmic reticulum and serves to target the protein to the cell surface. There, the glucosamine-inositol phospholipid moiety is cleaved off and the GPI-modified mannoprotein is covalently attached via its lipidless GPI glycan remnant to the 1,6-beta-glucan of the outer cell wall layer.

The protein localises to the secreted. It localises to the cell wall. The protein resides in the cell membrane. GPI-anchored cell wall protein involved in stabilizing the cell wall. The chain is GPI-anchored hemophore ARB_02741 from Arthroderma benhamiae (strain ATCC MYA-4681 / CBS 112371) (Trichophyton mentagrophytes).